The sequence spans 322 residues: Retinal homeobox protein Rx-A (322 aa).

Positions 32–39 (HSIEAILG) match the Octapeptide motif motif. The segment covering 75–87 (TEEIHPQQEHLED) has biased composition (basic and acidic residues). The disordered stretch occupies residues 75–136 (TEEIHPQQEH…KKKHRRNRTT (62 aa)). Over residues 100–117 (KTSSECLSPGLSTSNSDN) the composition is skewed to polar residues. A DNA-binding region (homeobox) is located at residues 130–189 (HRRNRTTFTTYQLHELERAFEKSHYPDVYSREELAMKVNLPEVRVQVWFQNRRAKWRRQE). Positions 302 to 315 (NSIASLRMKAKEHI) match the OAR motif. Positions 308–312 (RMKAK) match the Nuclear localization signal motif.

It belongs to the paired homeobox family. Bicoid subfamily. In terms of tissue distribution, highly expressed in anterior neural plate followed by neural retina, pigmented epithelium, in pineal gland, diencephalon floor and epiphysis. At later stages, the neuroretina remains the primary site of expression. No expression in the developing lens and cornea.

Its subcellular location is the nucleus. Plays a critical role in eye formation by regulating the initial specification of retinal cells and/or their subsequent proliferation. This chain is Retinal homeobox protein Rx-A (rax-a), found in Xenopus laevis (African clawed frog).